Reading from the N-terminus, the 299-residue chain is MKALWAVLVVTLLAGCRADVQPELEMQEPALWQSGQPWELALGRFWDYLRWVQTLSDQVQEELLNSQVTQELTVLMEDTMKEVKAYKNELEEELGPVAEDTKARLSKELQGAQARLRADMEEVRNRLAHYSEEMQVMLGQSPDELRARLGSHLRKLRKRLLRDAEDLQKRLAVYKAGAREGAERGVSAIRERLGSLVEQSRVRAALTGQPLRERAQAWGERLRGRLEEVGGRARDRLDEVREQMEEVRAKVEEQAEAFQARLKGWFEPMMEDMRRQWADLIEKVQLAVGASTPVPSEDH.

The N-terminal stretch at 1-18 (MKALWAVLVVTLLAGCRA) is a signal peptide. A run of 8 repeats spans residues 74–95 (VLME…EELG), 96–117 (PVAE…ARLR), 118–139 (ADME…VMLG), 140–161 (QSPD…KRLL), 162–183 (RDAE…EGAE), 184–205 (RGVS…VRAA), 206–223 (LTGQ…ERLR), and 224–245 (GRLE…EQME). Positions 74 to 245 (VLMEDTMKEV…RLDEVREQME (172 aa)) are 8 X 22 AA approximate tandem repeats. Residues 152–162 (HLRKLRKRLLR) are LDL and other lipoprotein receptors binding. 156-159 (LRKR) lines the heparin pocket. Positions 204–273 (AALTGQPLRE…GWFEPMMEDM (70 aa)) are lipid-binding and lipoprotein association. 219-226 (GERLRGRL) is a binding site for heparin. The tract at residues 261-273 (RLKGWFEPMMEDM) is specificity for association with VLDL.

It belongs to the apolipoprotein A1/A4/E family. Homotetramer. May interact with ABCA1; functionally associated with ABCA1 in the biogenesis of HDLs. May interact with APP/A4 amyloid-beta peptide; the interaction is extremely stable in vitro but its physiological significance is unclear. May interact with MAPT. May interact with MAP2. In the cerebrospinal fluid, interacts with secreted SORL1. Interacts with PMEL; this allows the loading of PMEL luminal fragment on ILVs to induce fibril nucleation. In terms of processing, APOE exists as multiple glycosylated and sialylated glycoforms within cells and in plasma. The extent of glycosylation and sialylation are tissue and context specific. Post-translationally, glycated in plasma VLDL. Phosphorylated by FAM20C in the extracellular medium.

It is found in the secreted. The protein localises to the extracellular space. It localises to the extracellular matrix. Its subcellular location is the extracellular vesicle. The protein resides in the endosome. It is found in the multivesicular body. APOE is an apolipoprotein, a protein associating with lipid particles, that mainly functions in lipoprotein-mediated lipid transport between organs via the plasma and interstitial fluids. APOE is a core component of plasma lipoproteins and is involved in their production, conversion and clearance. Apolipoproteins are amphipathic molecules that interact both with lipids of the lipoprotein particle core and the aqueous environment of the plasma. As such, APOE associates with chylomicrons, chylomicron remnants, very low density lipoproteins (VLDL) and intermediate density lipoproteins (IDL) but shows a preferential binding to high-density lipoproteins (HDL). It also binds a wide range of cellular receptors including the LDL receptor/LDLR and the very low-density lipoprotein receptor/VLDLR that mediate the cellular uptake of the APOE-containing lipoprotein particles. Finally, APOE also has a heparin-binding activity and binds heparan-sulfate proteoglycans on the surface of cells, a property that supports the capture and the receptor-mediated uptake of APOE-containing lipoproteins by cells. This Heterocephalus glaber (Naked mole rat) protein is Apolipoprotein E (APOE).